The sequence spans 56 residues: MAVQKSKKSRSMRGMRRSHDALTTAALSVDATSGETHLRHNVTAEGFYRGKKVINK.

Residues 1–16 (MAVQKSKKSRSMRGMR) show a composition bias toward basic residues. The tract at residues 1 to 21 (MAVQKSKKSRSMRGMRRSHDA) is disordered.

It belongs to the bacterial ribosomal protein bL32 family.

This is Large ribosomal subunit protein bL32 from Vibrio atlanticus (strain LGP32) (Vibrio splendidus (strain Mel32)).